Consider the following 89-residue polypeptide: Mitochondrial import inner membrane translocase subunit Tim9 (89 aa).

The residue at position 2 (Ala2) is an N-acetylalanine. The short motif at 28-52 is the Twin CX3C motif element; that stretch reads CFLDCVKDFTTREVKPEEVTCSEHC. Cystine bridges form between Cys28–Cys52 and Cys32–Cys48.

It belongs to the small Tim family. Heterohexamer; composed of 3 copies of TIMM9 and 3 copies of TIMM10/TIM10A, named soluble 70 kDa complex. The complex forms a 6-bladed alpha-propeller structure and associates with the TIMM22 component of the TIM22 complex. Interacts with multi-pass transmembrane proteins in transit. Also forms a complex composed of TIMM9, TIMM10/TIM10A and FXC1/TIM10B.

It localises to the mitochondrion inner membrane. Mitochondrial intermembrane chaperone that participates in the import and insertion of multi-pass transmembrane proteins into the mitochondrial inner membrane. May also be required for the transfer of beta-barrel precursors from the TOM complex to the sorting and assembly machinery (SAM complex) of the outer membrane. Acts as a chaperone-like protein that protects the hydrophobic precursors from aggregation and guide them through the mitochondrial intermembrane space. The protein is Mitochondrial import inner membrane translocase subunit Tim9 (Timm9) of Mus musculus (Mouse).